The sequence spans 102 residues: MVTEIRSLKQLEEIFSAKKNVIVDFWAAWCGPCKLTSPEFQKAADEFSDAQFVKVNVDDHTDIAAAYNITSLPTIVVFENGVEKKRAIGFMPKTKIIDLFNN.

A Thioredoxin domain is found at 2-102 (VTEIRSLKQL…KTKIIDLFNN (101 aa)). Residues C30 and C33 are joined by a disulfide bond.

It belongs to the thioredoxin family.

Its function is as follows. Participates in various redox reactions through the reversible oxidation of its active center dithiol to a disulfide and catalyzes dithiol-disulfide exchange reactions. This Mycoplasma genitalium (strain ATCC 33530 / DSM 19775 / NCTC 10195 / G37) (Mycoplasmoides genitalium) protein is Thioredoxin (trxA).